A 391-amino-acid chain; its full sequence is MTASSSLFSCSMHMEVLTPKISKWPKDFVSCHSKISYVETNYLKSTCYPISRFLCINNLSKCDKMIKTRQRDGIHCFSEGQKFQLDDVIEAQQFDRDILNAIFEIARDMENIERNSPESQILKGYLMATLFYEPSTRTRLSFESAMRRLGGEVLTTENAREFSSAAKGETLEDTIRTVEGYSDLIVLRHFESGAARRAAAIAGIPIVNAGDGPGQHPSQALLDVYTIEREIGKLDGIKVGLVGDLANGRTVRSLAYLLAKYKDVKIYFVSPEVVKMKDDIKDYLTSKGVDWEESSDLVEVASECDVVYQTRIQKERFGERLDLYEKARGKFIVNQNILNAMQRHAVIMHPLPRLDEITVDVDADPRAAYFRQAKYGLYIRMALLKLLLVGW.

Residues 1–69 (MTASSSLFSC…SKCDKMIKTR (69 aa)) constitute a chloroplast transit peptide. Carbamoyl phosphate is bound by residues R137 and T138. The UMP site is built by R137 and T138. An L-aspartate-binding site is contributed by K167. 3 residues coordinate carbamoyl phosphate: R188, H216, and Q219. UMP contacts are provided by R188 and H216. Residues R249 and R311 each contribute to the UMP site. L-aspartate-binding residues include R249 and R311. Residues L351 and P352 each coordinate carbamoyl phosphate.

This sequence belongs to the aspartate/ornithine carbamoyltransferase superfamily. ATCase family. As to quaternary structure, homotrimer.

It localises to the plastid. Its subcellular location is the chloroplast. The catalysed reaction is carbamoyl phosphate + L-aspartate = N-carbamoyl-L-aspartate + phosphate + H(+). It participates in pyrimidine metabolism; UMP biosynthesis via de novo pathway; (S)-dihydroorotate from bicarbonate: step 2/3. Feedback inhibited by UMP. In terms of biological role, catalyzes the condensation of carbamoyl phosphate and aspartate to form carbamoyl aspartate and inorganic phosphate, the committed step in the de novo pyrimidine nucleotide biosynthesis pathway. The protein is Aspartate carbamoyltransferase 3, chloroplastic (PYRB3) of Pisum sativum (Garden pea).